Consider the following 318-residue polypeptide: NADH-ubiquinone oxidoreductase chain 1 (318 aa).

8 helical membrane passes run 2–22 (FMIN…FLTL), 70–90 (MFIL…IPLP), 100–120 (LGVL…LWSG), 147–167 (AIIL…TLII), 172–192 (MWLI…TLAE), 222–242 (LFFM…AILF), 253–273 (ELYT…FLWI), and 294–314 (LPLT…TSGI).

Belongs to the complex I subunit 1 family. As to quaternary structure, core subunit of respiratory chain NADH dehydrogenase (Complex I) which is composed of 45 different subunits.

It is found in the mitochondrion inner membrane. It carries out the reaction a ubiquinone + NADH + 5 H(+)(in) = a ubiquinol + NAD(+) + 4 H(+)(out). Core subunit of the mitochondrial membrane respiratory chain NADH dehydrogenase (Complex I) which catalyzes electron transfer from NADH through the respiratory chain, using ubiquinone as an electron acceptor. Essential for the catalytic activity and assembly of complex I. The chain is NADH-ubiquinone oxidoreductase chain 1 (MT-ND1) from Bos indicus (Zebu).